A 286-amino-acid chain; its full sequence is P2R1A-PPP2R2A-interacting phosphatase regulator 1 (286 aa).

The disordered stretch occupies residues 1–46 (MAQEKMELDLELPAGTGASPAEGGGPGSGGLRRSNSAPLIHGLSDS). Ser-34 bears the Phosphoserine mark. Ser-36 carries the phosphoserine; by CHEK1 modification. A phosphoserine mark is found at Ser-44, Ser-47, Ser-61, and Ser-75. Residue Lys-88 forms a Glycyl lysine isopeptide (Lys-Gly) (interchain with G-Cter in SUMO1) linkage. 2 positions are modified to phosphoserine: Ser-142 and Ser-146. Thr-148 is subject to Phosphothreonine. The disordered stretch occupies residues 166–187 (SNGLPPSPIPSPTTRFTTRRSQ). A compositionally biased stretch (low complexity) spans 177–187 (PTTRFTTRRSQ). Phosphoserine is present on residues Ser-186 and Ser-188. The segment at 238 to 286 (VSSDTLDGNSSSAGSSCNSPAKVSTTTDSPVSPAQAASPFIPVDELSSK) is disordered. A compositionally biased stretch (low complexity) spans 245 to 256 (GNSSSAGSSCNS). Residues 258–269 (AKVSTTTDSPVS) are compositionally biased toward polar residues. Phosphoserine is present on residues Ser-266, Ser-269, and Ser-275.

It belongs to the FAM122 family. In terms of assembly, interacts with PPP2CA and PPP2R1A. Interacts (via its N-terminus) with PPP2R2A; the interaction is direct and this interaction inhibits PP2A activity. The CHEK1-mediated Ser-36 phosphorylated form interacts with 14-3-3 proteins. Post-translationally, CHEK1-mediated phosphorylation at Ser-36 negatively regulates its ability to inhibit serine/threonine-protein phosphatase 2A (PP2A) activity. Phosphorylation leads to its release from the PP2A complex and its sequestration by 14-3-3 proteins in the cytoplasm resulting in its inability to translocate to the nucleus, where it otherwise inhibits PP2A.

The protein resides in the nucleus. The protein localises to the cytoplasm. Its function is as follows. Acts as an inhibitor of serine/threonine-protein phosphatase 2A (PP2A) activity. Inhibits PP2A activity by blocking the substrate binding site on PPP2R2A and the active site of PPP2CA. Potentiates ubiquitin-mediated proteasomal degradation of serine/threonine-protein phosphatase 2A catalytic subunit alpha (PPP2CA). Inhibits PP2A-mediated dephosphorylation of WEE1, promoting ubiquitin-mediated proteolysis of WEE1, thereby releasing G2/M checkpoint. This is P2R1A-PPP2R2A-interacting phosphatase regulator 1 from Rattus norvegicus (Rat).